The following is a 391-amino-acid chain: DNA-directed RNA polymerase subunit Rpo1C (391 aa).

It belongs to the RNA polymerase beta' chain family. As to quaternary structure, part of the RNA polymerase complex.

Its subcellular location is the cytoplasm. It is found in the chromosome. It catalyses the reaction RNA(n) + a ribonucleoside 5'-triphosphate = RNA(n+1) + diphosphate. In terms of biological role, DNA-dependent RNA polymerase (RNAP) catalyzes the transcription of DNA into RNA using the four ribonucleoside triphosphates as substrates. Forms part of the jaw domain. The protein is DNA-directed RNA polymerase subunit Rpo1C of Thermococcus kodakarensis (strain ATCC BAA-918 / JCM 12380 / KOD1) (Pyrococcus kodakaraensis (strain KOD1)).